A 451-amino-acid polypeptide reads, in one-letter code: Phosphoglucosamine mutase (451 aa).

Catalysis depends on Ser-107, which acts as the Phosphoserine intermediate. The Mg(2+) site is built by Ser-107, Asp-246, Asp-248, and Asp-250. Ser-107 is modified (phosphoserine).

It belongs to the phosphohexose mutase family. Requires Mg(2+) as cofactor. Post-translationally, activated by phosphorylation.

It catalyses the reaction alpha-D-glucosamine 1-phosphate = D-glucosamine 6-phosphate. In terms of biological role, catalyzes the conversion of glucosamine-6-phosphate to glucosamine-1-phosphate. The protein is Phosphoglucosamine mutase of Burkholderia ambifaria (strain ATCC BAA-244 / DSM 16087 / CCUG 44356 / LMG 19182 / AMMD) (Burkholderia cepacia (strain AMMD)).